Consider the following 729-residue polypeptide: Ribosomal RNA large subunit methyltransferase K/L (729 aa).

Positions 47-158 (TFYRLCLWSR…KNELTLALDL (112 aa)) constitute a THUMP domain.

Belongs to the methyltransferase superfamily. RlmKL family.

It localises to the cytoplasm. The enzyme catalyses guanosine(2445) in 23S rRNA + S-adenosyl-L-methionine = N(2)-methylguanosine(2445) in 23S rRNA + S-adenosyl-L-homocysteine + H(+). It catalyses the reaction guanosine(2069) in 23S rRNA + S-adenosyl-L-methionine = N(2)-methylguanosine(2069) in 23S rRNA + S-adenosyl-L-homocysteine + H(+). In terms of biological role, specifically methylates the guanine in position 2445 (m2G2445) and the guanine in position 2069 (m7G2069) of 23S rRNA. This chain is Ribosomal RNA large subunit methyltransferase K/L, found in Dichelobacter nodosus (strain VCS1703A).